A 130-amino-acid polypeptide reads, in one-letter code: Small ribosomal subunit protein uS8 (130 aa).

It belongs to the universal ribosomal protein uS8 family. In terms of assembly, part of the 30S ribosomal subunit.

Its function is as follows. One of the primary rRNA binding proteins, it binds directly to 16S rRNA central domain where it helps coordinate assembly of the platform of the 30S subunit. The chain is Small ribosomal subunit protein uS8 from Methanococcus maripaludis (strain C5 / ATCC BAA-1333).